A 393-amino-acid chain; its full sequence is uncharacterized protein (393 aa).

Position 67–74 (67–74) interacts with ATP; that stretch reads GPDGMGKS.

This is an uncharacterized protein from Mycobacterium tuberculosis (strain CDC 1551 / Oshkosh).